The sequence spans 259 residues: Thiazole synthase (259 aa).

The active-site Schiff-base intermediate with DXP is lysine 98. Residues glycine 159, 185–186 (AG), and 207–208 (NS) contribute to the 1-deoxy-D-xylulose 5-phosphate site.

Belongs to the ThiG family. Homotetramer. Forms heterodimers with either ThiH or ThiS.

It localises to the cytoplasm. The enzyme catalyses [ThiS sulfur-carrier protein]-C-terminal-Gly-aminoethanethioate + 2-iminoacetate + 1-deoxy-D-xylulose 5-phosphate = [ThiS sulfur-carrier protein]-C-terminal Gly-Gly + 2-[(2R,5Z)-2-carboxy-4-methylthiazol-5(2H)-ylidene]ethyl phosphate + 2 H2O + H(+). It functions in the pathway cofactor biosynthesis; thiamine diphosphate biosynthesis. Its function is as follows. Catalyzes the rearrangement of 1-deoxy-D-xylulose 5-phosphate (DXP) to produce the thiazole phosphate moiety of thiamine. Sulfur is provided by the thiocarboxylate moiety of the carrier protein ThiS. In vitro, sulfur can be provided by H(2)S. This is Thiazole synthase from Chlorobium limicola (strain DSM 245 / NBRC 103803 / 6330).